The sequence spans 432 residues: Enolase (432 aa).

Gln-163 is a binding site for (2R)-2-phosphoglycerate. Residue Glu-205 is the Proton donor of the active site. Residues Asp-242, Glu-287, and Asp-314 each coordinate Mg(2+). Residues Lys-339, Arg-368, Ser-369, and Lys-390 each coordinate (2R)-2-phosphoglycerate. Lys-339 functions as the Proton acceptor in the catalytic mechanism.

The protein belongs to the enolase family. Requires Mg(2+) as cofactor.

Its subcellular location is the cytoplasm. The protein localises to the secreted. It localises to the cell surface. It carries out the reaction (2R)-2-phosphoglycerate = phosphoenolpyruvate + H2O. It participates in carbohydrate degradation; glycolysis; pyruvate from D-glyceraldehyde 3-phosphate: step 4/5. In terms of biological role, catalyzes the reversible conversion of 2-phosphoglycerate (2-PG) into phosphoenolpyruvate (PEP). It is essential for the degradation of carbohydrates via glycolysis. The chain is Enolase from Myxococcus xanthus (strain DK1622).